A 368-amino-acid polypeptide reads, in one-letter code: MGLAGAKNKRKLGNDPNNTKWSRNTDTFGQKILRAQGWQPGEYLGAKDAAHAEWHTEANTTHIRVTLKDDTLGLGAKRNNGDECTGLDAFQHLLGRLNGKSDEALEAEQKVRNDVKLSLYIQKKFGMMRFVKGGWLVGDQVKQTPDEEAEEIPDSTETSEAPEPAAVESKKRKADRRSDKEDDKLGKKEKKSKKRKAGSEGDVGGEGGQKEKDKKSKRRKTESDECEEPAVTPKTAESLDEASGASEAGNTKNEKKDKKRDKKEKKERRDKKEKKEKRRIEKAAAESGAETGDSISEEKKRKKKEATSEPSSAPTPTDSNSSTPTGSGYSTPIPTGSSRYLARSRFIAQKKMAFADSAALNQIFMIKS.

The tract at residues 1–24 is disordered; that stretch reads MGLAGAKNKRKLGNDPNNTKWSRN. Polar residues predominate over residues 15-24; the sequence is DPNNTKWSRN. Residues 25 to 79 form the G-patch domain; sequence TDTFGQKILRAQGWQPGEYLGAKDAAHAEWHTEANTTHIRVTLKDDTLGLGAKRN. Positions 144-337 are disordered; it reads TPDEEAEEIP…GYSTPIPTGS (194 aa). Positions 176 to 186 are enriched in basic and acidic residues; the sequence is RRSDKEDDKLG. Composition is skewed to basic residues over residues 187–196 and 257–277; these read KKEKKSKKRK and DKKR…KKEK. A compositionally biased stretch (low complexity) spans 310–337; sequence PSSAPTPTDSNSSTPTGSGYSTPIPTGS.

This sequence belongs to the PINX1 family.

It localises to the nucleus. Its subcellular location is the nucleolus. In terms of biological role, involved in rRNA-processing at A0, A1 and A2 sites and negatively regulates telomerase. The polypeptide is Protein PXR1 (PXR1) (Chaetomium globosum (strain ATCC 6205 / CBS 148.51 / DSM 1962 / NBRC 6347 / NRRL 1970) (Soil fungus)).